A 268-amino-acid polypeptide reads, in one-letter code: Tryptophan synthase alpha chain (268 aa).

Catalysis depends on proton acceptor residues Glu-49 and Asp-60.

Belongs to the TrpA family. In terms of assembly, tetramer of two alpha and two beta chains.

The catalysed reaction is (1S,2R)-1-C-(indol-3-yl)glycerol 3-phosphate + L-serine = D-glyceraldehyde 3-phosphate + L-tryptophan + H2O. The protein operates within amino-acid biosynthesis; L-tryptophan biosynthesis; L-tryptophan from chorismate: step 5/5. The alpha subunit is responsible for the aldol cleavage of indoleglycerol phosphate to indole and glyceraldehyde 3-phosphate. In Escherichia coli (strain SMS-3-5 / SECEC), this protein is Tryptophan synthase alpha chain.